A 67-amino-acid chain; its full sequence is Large ribosomal subunit protein bL35 (67 aa).

This sequence belongs to the bacterial ribosomal protein bL35 family.

The sequence is that of Large ribosomal subunit protein bL35 from Dehalococcoides mccartyi (strain ATCC BAA-2100 / JCM 16839 / KCTC 5957 / BAV1).